The chain runs to 471 residues: Anthocyanidin 3-O-glucosyltransferase (471 aa).

H24 functions as the Proton acceptor in the catalytic mechanism. H24 contributes to the an anthocyanidin binding site. Catalysis depends on D130, which acts as the Charge relay. Position 152 (T152) interacts with UDP-alpha-D-glucose. H161 is a binding site for an anthocyanidin. UDP-alpha-D-glucose contacts are provided by A352, Q354, H369, W372, S374, and E377. G392 contributes to the an anthocyanidin binding site. Residues D393 and Q394 each coordinate UDP-alpha-D-glucose.

This sequence belongs to the UDP-glycosyltransferase family.

It carries out the reaction an anthocyanidin + UDP-alpha-D-glucose + H(+) = an anthocyanidin 3-O-beta-D-glucoside + UDP. The protein operates within pigment biosynthesis; anthocyanin biosynthesis. In the presence of other necessary color factors, this glycosylation reaction allows the accumulation of anthocyanin pigments. The polypeptide is Anthocyanidin 3-O-glucosyltransferase (BZ1) (Zea mays (Maize)).